The primary structure comprises 294 residues: Proline iminopeptidase (294 aa).

The region spanning Pro28–Glu278 is the AB hydrolase-1 domain. Ser106 functions as the Nucleophile in the catalytic mechanism. The active site involves Asp245. His272 functions as the Proton donor in the catalytic mechanism.

Belongs to the peptidase S33 family. As to quaternary structure, homotrimer.

Its subcellular location is the cell envelope. The enzyme catalyses Release of N-terminal proline from a peptide.. With respect to regulation, inhibited by 3,4-DCI, but no significant effect on enzyme activity by pepstatin A, E-64, 1,10-phenanthroline or EDTA. Releases the N-terminal proline from various substrates. Cleaves Pro-betaNA (L-prolyl-beta-naphthylamide) effectively. The polypeptide is Proline iminopeptidase (pip) (Lactobacillus delbrueckii subsp. lactis).